The primary structure comprises 337 residues: Viral cathepsin (337 aa).

An N-terminal signal peptide occupies residues 1–19; the sequence is MTLLMIFTILLVASSQIEG. Residues 20-126 constitute a propeptide, activation peptide; the sequence is HLKFDIHDAQ…DAPPDVHDEL (107 aa). 3 cysteine pairs are disulfide-bonded: Cys147-Cys188, Cys181-Cys221, and Cys276-Cys324. Residue Cys150 is part of the active site. Asn172 carries N-linked (GlcNAc...) asparagine; by host glycosylation. Catalysis depends on residues His283 and Asn303.

Belongs to the peptidase C1 family. Synthesized as an inactive proenzyme and activated by proteolytic removal of the inhibitory propeptide.

The enzyme catalyses Endopeptidase of broad specificity, hydrolyzing substrates of both cathepsin L and cathepsin B.. In terms of biological role, cysteine protease that plays an essential role in host liquefaction to facilitate horizontal transmission of the virus. May participate in the degradation of foreign protein expressed by the baculovirus system. The sequence is that of Viral cathepsin (VCATH) from Adoxophyes honmai (Smaller tea tortrix moth).